We begin with the raw amino-acid sequence, 762 residues long: Putative BTB/POZ domain-containing protein L272 (762 aa).

Positions 16 to 86 (TDITIILKDE…FYGQKIKSHN (71 aa)) constitute a BTB domain. The span at 390–410 (DLDNSNDLNDSNDLDDSDDSN) shows a compositional bias: acidic residues. 2 disordered regions span residues 390 to 411 (DLDN…DSND) and 532 to 556 (ISDN…NSDN). A compositionally biased stretch (low complexity) spans 532 to 543 (ISDNSDNLNNSD). A coiled-coil region spans residues 737-762 (FSENYCDELINRLNNALKKIEQKYPN).

It belongs to the mimivirus BTB/WD family.

This Acanthamoeba polyphaga (Amoeba) protein is Putative BTB/POZ domain-containing protein L272.